The primary structure comprises 368 residues: 4-hydroxy-3-methylbut-2-en-1-yl diphosphate synthase (flavodoxin) (368 aa).

The [4Fe-4S] cluster site is built by cysteine 271, cysteine 274, cysteine 306, and glutamate 313.

It belongs to the IspG family. Requires [4Fe-4S] cluster as cofactor.

The catalysed reaction is (2E)-4-hydroxy-3-methylbut-2-enyl diphosphate + oxidized [flavodoxin] + H2O + 2 H(+) = 2-C-methyl-D-erythritol 2,4-cyclic diphosphate + reduced [flavodoxin]. Its pathway is isoprenoid biosynthesis; isopentenyl diphosphate biosynthesis via DXP pathway; isopentenyl diphosphate from 1-deoxy-D-xylulose 5-phosphate: step 5/6. In terms of biological role, converts 2C-methyl-D-erythritol 2,4-cyclodiphosphate (ME-2,4cPP) into 1-hydroxy-2-methyl-2-(E)-butenyl 4-diphosphate. In Haemophilus influenzae (strain PittGG), this protein is 4-hydroxy-3-methylbut-2-en-1-yl diphosphate synthase (flavodoxin).